The sequence spans 380 residues: Large ribosomal subunit protein mL38 (380 aa).

Residues 1–26 (MAAPWWRAAFSVTGRCRGISTSASLS) constitute a mitochondrion transit peptide. The stretch at 98-123 (SRTQKLQERKRFLQELRANSEEERAA) forms a coiled coil.

The protein belongs to the phosphatidylethanolamine-binding protein family. Mitochondrion-specific ribosomal protein mL38 subfamily. Component of the mitochondrial ribosome large subunit (39S) which comprises a 16S rRNA and about 50 distinct proteins.

It localises to the mitochondrion. This is Large ribosomal subunit protein mL38 (Mrpl38) from Rattus norvegicus (Rat).